Reading from the N-terminus, the 578-residue chain is Arginine--tRNA ligase (578 aa).

Positions 127 to 137 (PNLAKEMHVGH) match the 'HIGH' region motif.

It belongs to the class-I aminoacyl-tRNA synthetase family. As to quaternary structure, monomer.

The protein localises to the cytoplasm. The catalysed reaction is tRNA(Arg) + L-arginine + ATP = L-arginyl-tRNA(Arg) + AMP + diphosphate. This Pseudomonas fluorescens (strain ATCC BAA-477 / NRRL B-23932 / Pf-5) protein is Arginine--tRNA ligase.